Here is a 514-residue protein sequence, read N- to C-terminus: RNA-splicing ligase RtcB homolog (514 aa).

Asp-128, Cys-131, His-236, His-268, and His-362 together coordinate Mn(2+). Asn-235 to Glu-239 provides a ligand contact to GMP. GMP contacts are provided by residues His-362–Asn-363, Gly-411–Met-414, Ser-418, His-437–Gly-440, and Lys-513. The GMP-histidine intermediate role is filled by His-437.

It belongs to the RtcB family. As to quaternary structure, catalytic component of the tRNA-splicing ligase complex. The cofactor is Mn(2+).

It carries out the reaction a 3'-end 3'-phospho-ribonucleotide-RNA + a 5'-end dephospho-ribonucleoside-RNA + GTP = a ribonucleotidyl-ribonucleotide-RNA + GMP + diphosphate. The catalysed reaction is a 3'-end 2',3'-cyclophospho-ribonucleotide-RNA + a 5'-end dephospho-ribonucleoside-RNA + GTP + H2O = a ribonucleotidyl-ribonucleotide-RNA + GMP + diphosphate + H(+). Functionally, catalytic subunit of the tRNA-splicing ligase complex that acts by directly joining spliced tRNA halves to mature-sized tRNAs by incorporating the precursor-derived splice junction phosphate into the mature tRNA as a canonical 3',5'-phosphodiester. May act as an RNA ligase with broad substrate specificity, and may function toward other RNAs. The chain is RNA-splicing ligase RtcB homolog from Ostreococcus lucimarinus (strain CCE9901).